Consider the following 194-residue polypeptide: dITP/XTP pyrophosphatase (194 aa).

Substrate is bound at residue 8 to 13; it reads TGNPGK. 2 residues coordinate Mg(2+): E38 and D67. The active-site Proton acceptor is the D67. Residues S68, 146 to 149, K169, and 174 to 175 contribute to the substrate site; these read FGYD and HR.

Belongs to the HAM1 NTPase family. Homodimer. Mg(2+) is required as a cofactor.

The enzyme catalyses XTP + H2O = XMP + diphosphate + H(+). It catalyses the reaction dITP + H2O = dIMP + diphosphate + H(+). The catalysed reaction is ITP + H2O = IMP + diphosphate + H(+). Pyrophosphatase that catalyzes the hydrolysis of nucleoside triphosphates to their monophosphate derivatives, with a high preference for the non-canonical purine nucleotides XTP (xanthosine triphosphate), dITP (deoxyinosine triphosphate) and ITP. Seems to function as a house-cleaning enzyme that removes non-canonical purine nucleotides from the nucleotide pool, thus preventing their incorporation into DNA/RNA and avoiding chromosomal lesions. The protein is dITP/XTP pyrophosphatase of Synechocystis sp. (strain ATCC 27184 / PCC 6803 / Kazusa).